The chain runs to 338 residues: S-adenosylmethionine:tRNA ribosyltransferase-isomerase (338 aa).

It belongs to the QueA family. As to quaternary structure, monomer.

The protein resides in the cytoplasm. It catalyses the reaction 7-aminomethyl-7-carbaguanosine(34) in tRNA + S-adenosyl-L-methionine = epoxyqueuosine(34) in tRNA + adenine + L-methionine + 2 H(+). It functions in the pathway tRNA modification; tRNA-queuosine biosynthesis. Its function is as follows. Transfers and isomerizes the ribose moiety from AdoMet to the 7-aminomethyl group of 7-deazaguanine (preQ1-tRNA) to give epoxyqueuosine (oQ-tRNA). This is S-adenosylmethionine:tRNA ribosyltransferase-isomerase from Francisella tularensis subsp. tularensis (strain WY96-3418).